A 144-amino-acid polypeptide reads, in one-letter code: Cytochrome c oxidase subunit 4 isoform 1, mitochondrial (144 aa).

Residues 1-73 (SVVKSEDYAL…SFAEMNRGSN (73 aa)) are Mitochondrial matrix-facing. Lys4 carries the post-translational modification N6-acetyllysine; alternate. N6-succinyllysine; alternate is present on Lys4. 2 positions are modified to phosphoserine: Ser31 and Ser33. Lys35 bears the N6-acetyllysine; alternate mark. Lys35 bears the N6-succinyllysine; alternate mark. Lys42 is subject to N6-acetyllysine. A helical transmembrane segment spans residues 74 to 99 (EWKTVVGAAMFFIGFTAILIILEKRY). The Mitochondrial intermembrane portion of the chain corresponds to 100 to 144 (VYGPLPHTFDKEWVAMQTKRMLDLKVNPVDGLASKWDYDKKEWKK).

It belongs to the cytochrome c oxidase IV family. In terms of assembly, component of the cytochrome c oxidase (complex IV, CIV), a multisubunit enzyme composed of 14 subunits. The complex is composed of a catalytic core of 3 subunits MT-CO1, MT-CO2 and MT-CO3, encoded in the mitochondrial DNA, and 11 supernumerary subunits COX4I, COX5A, COX5B, COX6A, COX6B, COX6C, COX7A, COX7B, COX7C, COX8 and NDUFA4, which are encoded in the nuclear genome. The complex exists as a monomer or a dimer and forms supercomplexes (SCs) in the inner mitochondrial membrane with NADH-ubiquinone oxidoreductase (complex I, CI) and ubiquinol-cytochrome c oxidoreductase (cytochrome b-c1 complex, complex III, CIII), resulting in different assemblies (supercomplex SCI(1)III(2)IV(1) and megacomplex MCI(2)III(2)IV(2)). Interacts with PHB2; the interaction decreases in absence of SPHK2. Interacts with AFG1L. Interacts with ABCB7; this interaction allows the regulation of cellular iron homeostasis and cellular reactive oxygen species (ROS) levels in cardiomyocytes. Interacts with FLVCR2; this interaction occurs in the absence of heme and is disrupted upon heme binding. Interacts with IRGC.

It localises to the mitochondrion inner membrane. It participates in energy metabolism; oxidative phosphorylation. Component of the cytochrome c oxidase, the last enzyme in the mitochondrial electron transport chain which drives oxidative phosphorylation. The respiratory chain contains 3 multisubunit complexes succinate dehydrogenase (complex II, CII), ubiquinol-cytochrome c oxidoreductase (cytochrome b-c1 complex, complex III, CIII) and cytochrome c oxidase (complex IV, CIV), that cooperate to transfer electrons derived from NADH and succinate to molecular oxygen, creating an electrochemical gradient over the inner membrane that drives transmembrane transport and the ATP synthase. Cytochrome c oxidase is the component of the respiratory chain that catalyzes the reduction of oxygen to water. Electrons originating from reduced cytochrome c in the intermembrane space (IMS) are transferred via the dinuclear copper A center (CU(A)) of subunit 2 and heme A of subunit 1 to the active site in subunit 1, a binuclear center (BNC) formed by heme A3 and copper B (CU(B)). The BNC reduces molecular oxygen to 2 water molecules using 4 electrons from cytochrome c in the IMS and 4 protons from the mitochondrial matrix. The polypeptide is Cytochrome c oxidase subunit 4 isoform 1, mitochondrial (COX4I1) (Aotus azarae (Azara's night monkey)).